The sequence spans 176 residues: ATP-dependent protease subunit HslV (176 aa).

Threonine 2 is an active-site residue. Na(+) is bound by residues glycine 157, cysteine 160, and threonine 163.

This sequence belongs to the peptidase T1B family. HslV subfamily. A double ring-shaped homohexamer of HslV is capped on each side by a ring-shaped HslU homohexamer. The assembly of the HslU/HslV complex is dependent on binding of ATP.

The protein resides in the cytoplasm. It carries out the reaction ATP-dependent cleavage of peptide bonds with broad specificity.. Allosterically activated by HslU binding. Functionally, protease subunit of a proteasome-like degradation complex believed to be a general protein degrading machinery. The polypeptide is ATP-dependent protease subunit HslV (Marinobacter nauticus (strain ATCC 700491 / DSM 11845 / VT8) (Marinobacter aquaeolei)).